The chain runs to 94 residues: Integration host factor subunit beta (94 aa).

The protein belongs to the bacterial histone-like protein family. In terms of assembly, heterodimer of an alpha and a beta chain.

Functionally, this protein is one of the two subunits of integration host factor, a specific DNA-binding protein that functions in genetic recombination as well as in transcriptional and translational control. This chain is Integration host factor subunit beta, found in Ruegeria pomeroyi (strain ATCC 700808 / DSM 15171 / DSS-3) (Silicibacter pomeroyi).